Here is a 213-residue protein sequence, read N- to C-terminus: Adenylate kinase (213 aa).

10-15 (GSGKGT) contacts ATP. Residues 30–59 (STGDLFRTNIENDTPLGKEIKQIVENGQLV) are NMP. AMP-binding positions include threonine 31, arginine 36, 57 to 59 (QLV), 85 to 88 (GFPR), and glutamine 92. An LID region spans residues 121–158 (GRRICQSCCKIFNIYTLPTKEKEICDFCQGILYQRKDD). Arginine 122 contributes to the ATP binding site. The Zn(2+) site is built by cysteine 125 and cysteine 128. Residue 131 to 132 (IF) participates in ATP binding. The Zn(2+) site is built by cysteine 145 and cysteine 148. The AMP site is built by arginine 155 and arginine 166. Residue lysine 194 coordinates ATP.

Belongs to the adenylate kinase family. In terms of assembly, monomer.

It is found in the cytoplasm. The catalysed reaction is AMP + ATP = 2 ADP. It participates in purine metabolism; AMP biosynthesis via salvage pathway; AMP from ADP: step 1/1. Its function is as follows. Catalyzes the reversible transfer of the terminal phosphate group between ATP and AMP. Plays an important role in cellular energy homeostasis and in adenine nucleotide metabolism. The chain is Adenylate kinase from Borrelia duttonii (strain Ly).